Here is a 161-residue protein sequence, read N- to C-terminus: ATP synthase subunit b 1 (161 aa).

Residues 5 to 25 (AETWVAVAFVLMVALFIYFGA) traverse the membrane as a helical segment.

This sequence belongs to the ATPase B chain family. As to quaternary structure, F-type ATPases have 2 components, F(1) - the catalytic core - and F(0) - the membrane proton channel. F(1) has five subunits: alpha(3), beta(3), gamma(1), delta(1), epsilon(1). F(0) has three main subunits: a(1), b(2) and c(10-14). The alpha and beta chains form an alternating ring which encloses part of the gamma chain. F(1) is attached to F(0) by a central stalk formed by the gamma and epsilon chains, while a peripheral stalk is formed by the delta and b chains.

The protein resides in the cell inner membrane. Functionally, f(1)F(0) ATP synthase produces ATP from ADP in the presence of a proton or sodium gradient. F-type ATPases consist of two structural domains, F(1) containing the extramembraneous catalytic core and F(0) containing the membrane proton channel, linked together by a central stalk and a peripheral stalk. During catalysis, ATP synthesis in the catalytic domain of F(1) is coupled via a rotary mechanism of the central stalk subunits to proton translocation. Its function is as follows. Component of the F(0) channel, it forms part of the peripheral stalk, linking F(1) to F(0). In Afipia carboxidovorans (strain ATCC 49405 / DSM 1227 / KCTC 32145 / OM5) (Oligotropha carboxidovorans), this protein is ATP synthase subunit b 1.